Reading from the N-terminus, the 405-residue chain is Argininosuccinate synthase (405 aa).

ATP contacts are provided by residues 11 to 19 (AYSGGLDTS) and alanine 38. Residues tyrosine 91 and serine 96 each coordinate L-citrulline. Glycine 121 serves as a coordination point for ATP. L-aspartate contacts are provided by threonine 123, asparagine 127, and aspartate 128. Residue asparagine 127 coordinates L-citrulline. 5 residues coordinate L-citrulline: arginine 131, serine 181, serine 190, glutamate 266, and tyrosine 278.

It belongs to the argininosuccinate synthase family. Type 1 subfamily. Homotetramer.

The protein resides in the cytoplasm. It carries out the reaction L-citrulline + L-aspartate + ATP = 2-(N(omega)-L-arginino)succinate + AMP + diphosphate + H(+). It functions in the pathway amino-acid biosynthesis; L-arginine biosynthesis; L-arginine from L-ornithine and carbamoyl phosphate: step 2/3. The sequence is that of Argininosuccinate synthase from Nitratiruptor sp. (strain SB155-2).